The chain runs to 540 residues: NADH-ubiquinone oxidoreductase chain 4 (540 aa).

A run of 14 helical transmembrane segments spans residues T2–L22, I35–C55, I89–I109, Q118–T138, L140–V160, F172–L192, L218–L238, P248–I268, Y282–L302, I310–V330, I338–I358, V376–I396, I415–L435, and V501–M521.

This sequence belongs to the complex I subunit 4 family.

The protein localises to the mitochondrion membrane. The catalysed reaction is a ubiquinone + NADH + 5 H(+)(in) = a ubiquinol + NAD(+) + 4 H(+)(out). Its function is as follows. Core subunit of the mitochondrial membrane respiratory chain NADH dehydrogenase (Complex I) that is believed to belong to the minimal assembly required for catalysis. Complex I functions in the transfer of electrons from NADH to the respiratory chain. The immediate electron acceptor for the enzyme is believed to be ubiquinone. In Dictyostelium discoideum (Social amoeba), this protein is NADH-ubiquinone oxidoreductase chain 4 (nad4).